Reading from the N-terminus, the 701-residue chain is Polyribonucleotide nucleotidyltransferase (701 aa).

Positions 485 and 491 each coordinate Mg(2+). A KH domain is found at 552–611 (PRIIKIRINPEKIRDVIGKGGAVIRALTEETGTTIDITDDGTVMIACVNAEGGELAKKRI). Residues 621–689 (GRVYDGTVLK…DKGRLRLSMK (69 aa)) enclose the S1 motif domain.

Belongs to the polyribonucleotide nucleotidyltransferase family. The cofactor is Mg(2+).

Its subcellular location is the cytoplasm. It carries out the reaction RNA(n+1) + phosphate = RNA(n) + a ribonucleoside 5'-diphosphate. Functionally, involved in mRNA degradation. Catalyzes the phosphorolysis of single-stranded polyribonucleotides processively in the 3'- to 5'-direction. This chain is Polyribonucleotide nucleotidyltransferase, found in Nitrosospira multiformis (strain ATCC 25196 / NCIMB 11849 / C 71).